The chain runs to 327 residues: Auxin-responsive protein IAA18 (327 aa).

Disordered stretches follow at residues 26–45, 52–98, and 180–202; these read VKEADGEGSRNTNLDADEDK, GLPG…IGTT, and NLTNGSSFKQSPERQNDEADDKA. An EAR-like (transcriptional repression) motif is present at residues 49–53; that stretch reads LKLGL. A compositionally biased stretch (basic and acidic residues) spans 58-69; that stretch reads QEERAADSREKI. The segment covering 70-82 has biased composition (low complexity); it reads QQQQRESSSEPSI. Positions 180–189 are enriched in polar residues; the sequence is NLTNGSSFKQ. The span at 190–202 shows a compositional bias: basic and acidic residues; sequence SPERQNDEADDKA. A PB1 domain is found at 209–313; that stretch reads RPLVKINMDG…TVKRLRVMRR (105 aa).

This sequence belongs to the Aux/IAA family. Homodimers and heterodimers. As to expression, highly expressed in flowers. Expressed in roots and etiolated seedlings.

Its subcellular location is the nucleus. Its function is as follows. Aux/IAA proteins are short-lived transcriptional factors that function as repressors of early auxin response genes at low auxin concentrations. The polypeptide is Auxin-responsive protein IAA18 (IAA18) (Oryza sativa subsp. japonica (Rice)).